A 304-amino-acid chain; its full sequence is MLQKPRNRGRSGGQAERDRDWSHSGNPGASRAGEDARVLRDGFAEEAPSTSRGPGGSQGSQGPSPQGARRAQAAPAVGPRSQKQLELKVSELVQFLLIKDQKKIPIKRADILKHVIGDYKDIFPDLFKRAAERLQYVFGYKLVELEPKSNTYILINTLEPVEEDAEMRGDQGTPTTGLLMIVLGLIFMKGNTIKETEAWDFLRRLGVYPTKKHLIFGDPKKLITEDFVRQRYLEYRRIPHTDPVDYEFQWGPRTNLETSKMKVLKFVAKVHNQDPKDWPAQYCEALADEENRARPQPSGPAPSS.

Disordered regions lie at residues 1 to 82 (MLQK…PRSQ) and 285 to 304 (ALADEENRARPQPSGPAPSS). A compositionally biased stretch (basic and acidic residues) spans 32–43 (AGEDARVLRDGF). S57, S60, and S64 each carry phosphoserine. The span at 60–80 (SQGPSPQGARRAQAAPAVGPR) shows a compositional bias: low complexity. Positions 78–304 (GPRSQKQLEL…PQPSGPAPSS (227 aa)) are interaction with NSMCE1. Residues 85 to 285 (LELKVSELVQ…KDWPAQYCEA (201 aa)) form the MAGE domain.

Component of the SMC5-SMC6 complex which consists at least of SMC5, SMC6, NSMCE2, NSMCE1, NSMCE4A or EID3 and NSMCE3. NSMCE1, NSMCE4A or EID3 and NSMCE3 probably form a subcomplex that bridges the head domains of the SMC5:SMC6 heterodimer. Interacts with PJA1. Interacts with E2F1 (via C-terminus). Interacts with NGFR (via C-terminus). Interacts with NSMCE1. Interacts with NSMCE4. Interacts with SMC6. Interacts with EID3. In terms of tissue distribution, ubiquitous.

The protein localises to the cytoplasm. It is found in the nucleus. It localises to the chromosome. The protein resides in the telomere. Its function is as follows. Component of the SMC5-SMC6 complex, a complex involved in repair of DNA double-strand breaks by homologous recombination. The complex may promote sister chromatid homologous recombination by recruiting the SMC1-SMC3 cohesin complex to double-strand breaks. The complex is required for telomere maintenance via recombination in ALT (alternative lengthening of telomeres) cell lines and mediates sumoylation of shelterin complex (telosome) components which is proposed to lead to shelterin complex disassembly in ALT-associated PML bodies (APBs). In vitro enhances ubiquitin ligase activity of NSMCE1. Proposed to act through recruitment and/or stabilization of the Ubl-conjugating enzyme (E2) at the E3:substrate complex. May be a growth suppressor that facilitates the entry of the cell into cell cycle arrest. This Homo sapiens (Human) protein is Non-structural maintenance of chromosomes element 3 homolog.